Consider the following 256-residue polypeptide: Hydroxyacylglutathione hydrolase (256 aa).

Residues His53, His55, Asp57, His58, His113, Asp130, and His168 each contribute to the Zn(2+) site.

Belongs to the metallo-beta-lactamase superfamily. Glyoxalase II family. Monomer. The cofactor is Zn(2+).

The catalysed reaction is an S-(2-hydroxyacyl)glutathione + H2O = a 2-hydroxy carboxylate + glutathione + H(+). It functions in the pathway secondary metabolite metabolism; methylglyoxal degradation; (R)-lactate from methylglyoxal: step 2/2. Functionally, thiolesterase that catalyzes the hydrolysis of S-D-lactoyl-glutathione to form glutathione and D-lactic acid. The chain is Hydroxyacylglutathione hydrolase from Tolumonas auensis (strain DSM 9187 / NBRC 110442 / TA 4).